The sequence spans 264 residues: Thymidylate synthase (264 aa).

Residue Arg21 participates in dUMP binding. His51 is a binding site for (6R)-5,10-methylene-5,6,7,8-tetrahydrofolate. 126 to 127 (RR) contacts dUMP. The active-site Nucleophile is the Cys146. DUMP contacts are provided by residues 166–169 (RSCD), Asn177, and 207–209 (HLY). Residue Asp169 coordinates (6R)-5,10-methylene-5,6,7,8-tetrahydrofolate. Residue Ala263 coordinates (6R)-5,10-methylene-5,6,7,8-tetrahydrofolate.

Belongs to the thymidylate synthase family. Bacterial-type ThyA subfamily. As to quaternary structure, homodimer.

It is found in the cytoplasm. The enzyme catalyses dUMP + (6R)-5,10-methylene-5,6,7,8-tetrahydrofolate = 7,8-dihydrofolate + dTMP. It participates in pyrimidine metabolism; dTTP biosynthesis. In terms of biological role, catalyzes the reductive methylation of 2'-deoxyuridine-5'-monophosphate (dUMP) to 2'-deoxythymidine-5'-monophosphate (dTMP) while utilizing 5,10-methylenetetrahydrofolate (mTHF) as the methyl donor and reductant in the reaction, yielding dihydrofolate (DHF) as a by-product. This enzymatic reaction provides an intracellular de novo source of dTMP, an essential precursor for DNA biosynthesis. In Xenorhabdus nematophila (strain ATCC 19061 / DSM 3370 / CCUG 14189 / LMG 1036 / NCIMB 9965 / AN6), this protein is Thymidylate synthase.